We begin with the raw amino-acid sequence, 277 residues long: 3-methyl-2-oxobutanoate hydroxymethyltransferase (277 aa).

Mg(2+)-binding residues include aspartate 53 and aspartate 96. 3-methyl-2-oxobutanoate-binding positions include 53–54, aspartate 96, and lysine 126; that span reads DS. Glutamate 128 provides a ligand contact to Mg(2+). Glutamate 195 (proton acceptor) is an active-site residue.

It belongs to the PanB family. As to quaternary structure, homodecamer; pentamer of dimers. Mg(2+) is required as a cofactor.

The protein resides in the cytoplasm. It carries out the reaction 3-methyl-2-oxobutanoate + (6R)-5,10-methylene-5,6,7,8-tetrahydrofolate + H2O = 2-dehydropantoate + (6S)-5,6,7,8-tetrahydrofolate. It functions in the pathway cofactor biosynthesis; (R)-pantothenate biosynthesis; (R)-pantoate from 3-methyl-2-oxobutanoate: step 1/2. Functionally, catalyzes the reversible reaction in which hydroxymethyl group from 5,10-methylenetetrahydrofolate is transferred onto alpha-ketoisovalerate to form ketopantoate. The polypeptide is 3-methyl-2-oxobutanoate hydroxymethyltransferase (Chlorobium luteolum (strain DSM 273 / BCRC 81028 / 2530) (Pelodictyon luteolum)).